A 321-amino-acid polypeptide reads, in one-letter code: Ribose-phosphate pyrophosphokinase (321 aa).

Residues 44–46 (DGE) and 103–104 (RQ) contribute to the ATP site. Mg(2+)-binding residues include H137 and D179. K202 is an active-site residue. Residues R204, D228, and 232–236 (DTAGT) contribute to the D-ribose 5-phosphate site.

This sequence belongs to the ribose-phosphate pyrophosphokinase family. Class I subfamily. Homohexamer. The cofactor is Mg(2+).

The protein localises to the cytoplasm. The catalysed reaction is D-ribose 5-phosphate + ATP = 5-phospho-alpha-D-ribose 1-diphosphate + AMP + H(+). The protein operates within metabolic intermediate biosynthesis; 5-phospho-alpha-D-ribose 1-diphosphate biosynthesis; 5-phospho-alpha-D-ribose 1-diphosphate from D-ribose 5-phosphate (route I): step 1/1. In terms of biological role, involved in the biosynthesis of the central metabolite phospho-alpha-D-ribosyl-1-pyrophosphate (PRPP) via the transfer of pyrophosphoryl group from ATP to 1-hydroxyl of ribose-5-phosphate (Rib-5-P). The sequence is that of Ribose-phosphate pyrophosphokinase from Staphylococcus aureus (strain Mu50 / ATCC 700699).